An 819-amino-acid polypeptide reads, in one-letter code: DNA replication licensing factor Mcm3 (819 aa).

One can recognise an MCM domain in the interval 290–496 (IFELLSKSLA…DVDQMISDHV (207 aa)). 5 residues coordinate ADP: Gln-348, Leu-388, Glu-389, Ala-390, and Ala-392. The short motif at 472–475 (SRFD) is the Arginine finger element. Ser-522 is modified (phosphoserine). Phosphotyrosine is present on Tyr-538. Residues 655–717 (DRPSKRRRNS…DAGDLTRRET (63 aa)) are disordered. Ser-664, Ser-666, Ser-680, and Ser-682 each carry phosphoserine. Phosphothreonine is present on residues Thr-690 and Thr-692. A phosphoserine mark is found at Ser-697, Ser-735, and Ser-739.

This sequence belongs to the MCM family. As to quaternary structure, component of the Mcm2-7 complex. The complex forms a toroidal hexameric ring with the proposed subunit order Mcm2-Mcm6-Mcm4-Mcm7-Mcm3-Mcm5.

The protein localises to the nucleus. The protein resides in the chromosome. It carries out the reaction ATP + H2O = ADP + phosphate + H(+). In terms of biological role, acts as a component of the Mcm2-7 complex (Mcm complex) (Mcm complex) which is the putative replicative helicase essential for 'once per cell cycle' DNA replication initiation and elongation in eukaryotic cells. Core component of CDC45-MCM-GINS (CMG) helicase, the molecular machine that unwinds template DNA during replication, and around which the replisome is built. The active ATPase sites in the Mcm2-7 ring are formed through the interaction surfaces of two neighboring subunits such that a critical structure of a conserved arginine finger motif is provided in trans relative to the ATP-binding site of the Walker A box of the adjacent subunit. The six ATPase active sites, however, are likely to contribute differentially to the complex helicase activity. The protein is DNA replication licensing factor Mcm3 (Mcm3) of Drosophila melanogaster (Fruit fly).